The following is a 138-amino-acid chain: MNHCILACDVGLKRIGLATLKQEIILPLPPIIRINRNQAAKELDNVLKERNIHILVVGMPSGGEAEHSDTQKRISHFISLLSFEGEICFVNEDYTSFNALQSLSYMKRQNRARAQKDGRIDSLSACEILQRYIQSQKS.

Belongs to the YqgF nuclease family.

The protein localises to the cytoplasm. Its function is as follows. Could be a nuclease involved in processing of the 5'-end of pre-16S rRNA. The protein is Putative pre-16S rRNA nuclease of Helicobacter hepaticus (strain ATCC 51449 / 3B1).